The primary structure comprises 337 residues: Phosphoribosylformylglycinamidine cyclo-ligase (337 aa).

This sequence belongs to the AIR synthase family.

Its subcellular location is the cytoplasm. It carries out the reaction 2-formamido-N(1)-(5-O-phospho-beta-D-ribosyl)acetamidine + ATP = 5-amino-1-(5-phospho-beta-D-ribosyl)imidazole + ADP + phosphate + H(+). The protein operates within purine metabolism; IMP biosynthesis via de novo pathway; 5-amino-1-(5-phospho-D-ribosyl)imidazole from N(2)-formyl-N(1)-(5-phospho-D-ribosyl)glycinamide: step 2/2. This Gloeobacter violaceus (strain ATCC 29082 / PCC 7421) protein is Phosphoribosylformylglycinamidine cyclo-ligase.